The chain runs to 499 residues: Hexokinase-2, chloroplastic (499 aa).

Residues 1-30 (MSVTVSSPAGRSFHISRSPYKKISKPRVII) constitute a chloroplast transit peptide. The Hexokinase domain maps to 39–490 (LAVAPILTKL…SGIGAALLAA (452 aa)). A hexokinase small subdomain region spans residues 94–232 (TGNEKGLFYA…GLGMQVSALV (139 aa)). The ADP site is built by Gly108, Thr109, and Asn110. D-glucose is bound by residues Thr198, Lys199, Asn233, and Asp234. The interval 233-479 (NDTVATLAGA…KNVVIEHSKD (247 aa)) is hexokinase large subdomain. Thr257 provides a ligand contact to ADP. D-glucose contacts are provided by Asn260, Glu288, and Glu318. Residue Gly444 participates in ADP binding.

This sequence belongs to the hexokinase family. In terms of tissue distribution, expressed in vascular starch sheath, xylem parenchyma, guard cells and root tips.

It is found in the plastid. Its subcellular location is the chloroplast stroma. It catalyses the reaction a D-hexose + ATP = a D-hexose 6-phosphate + ADP + H(+). The enzyme catalyses D-fructose + ATP = D-fructose 6-phosphate + ADP + H(+). The catalysed reaction is D-glucose + ATP = D-glucose 6-phosphate + ADP + H(+). It functions in the pathway carbohydrate metabolism; hexose metabolism. It participates in carbohydrate degradation; glycolysis; D-glyceraldehyde 3-phosphate and glycerone phosphate from D-glucose: step 1/4. In terms of biological role, fructose and glucose phosphorylating enzyme. In Nicotiana tabacum (Common tobacco), this protein is Hexokinase-2, chloroplastic (HXK2).